Reading from the N-terminus, the 423-residue chain is Imidazolonepropionase (423 aa).

Residues H91 and H93 each contribute to the Fe(3+) site. Residues H91 and H93 each contribute to the Zn(2+) site. Residues R100, Y163, and H193 each contribute to the 4-imidazolone-5-propanoate site. Y163 lines the N-formimidoyl-L-glutamate pocket. H257 serves as a coordination point for Fe(3+). H257 is a Zn(2+) binding site. Q260 contacts 4-imidazolone-5-propanoate. D331 contributes to the Fe(3+) binding site. Position 331 (D331) interacts with Zn(2+). N-formimidoyl-L-glutamate-binding residues include N333 and G335. T336 serves as a coordination point for 4-imidazolone-5-propanoate.

This sequence belongs to the metallo-dependent hydrolases superfamily. HutI family. Requires Zn(2+) as cofactor. The cofactor is Fe(3+).

It localises to the cytoplasm. It carries out the reaction 4-imidazolone-5-propanoate + H2O = N-formimidoyl-L-glutamate. It participates in amino-acid degradation; L-histidine degradation into L-glutamate; N-formimidoyl-L-glutamate from L-histidine: step 3/3. In terms of biological role, catalyzes the hydrolytic cleavage of the carbon-nitrogen bond in imidazolone-5-propanoate to yield N-formimidoyl-L-glutamate. It is the third step in the universal histidine degradation pathway. This is Imidazolonepropionase from Bdellovibrio bacteriovorus (strain ATCC 15356 / DSM 50701 / NCIMB 9529 / HD100).